The sequence spans 169 residues: Cell division inhibitor SulA (169 aa).

The segment at 106 to 112 (ALRTGNY) is ftsZ binding. The lon protease binding stretch occupies residues 162–169 (KIHSNLYH).

This sequence belongs to the SulA family. In terms of assembly, interacts with FtsZ. In terms of processing, is rapidly cleaved and degraded by the Lon protease once DNA damage is repaired.

Component of the SOS system and an inhibitor of cell division. Accumulation of SulA causes rapid cessation of cell division and the appearance of long, non-septate filaments. In the presence of GTP, binds a polymerization-competent form of FtsZ in a 1:1 ratio, thus inhibiting FtsZ polymerization and therefore preventing it from participating in the assembly of the Z ring. This mechanism prevents the premature segregation of damaged DNA to daughter cells during cell division. The chain is Cell division inhibitor SulA from Citrobacter koseri (strain ATCC BAA-895 / CDC 4225-83 / SGSC4696).